A 33-amino-acid polypeptide reads, in one-letter code: Cytochrome b6-f complex subunit 7 (33 aa).

A helical membrane pass occupies residues 9 to 29; the sequence is AVICFTLTLIGLSLGFVLLKI.

This sequence belongs to the PetM family. In terms of assembly, the 4 large subunits of the cytochrome b6-f complex are cytochrome b6, subunit IV (17 kDa polypeptide, PetD), cytochrome f and the Rieske protein, while the 4 small subunits are PetG, PetL, PetM and PetN. The complex functions as a dimer.

The protein resides in the plastid. It is found in the cyanelle thylakoid membrane. Component of the cytochrome b6-f complex, which mediates electron transfer between photosystem II (PSII) and photosystem I (PSI), cyclic electron flow around PSI, and state transitions. This chain is Cytochrome b6-f complex subunit 7, found in Cyanophora paradoxa.